The following is a 388-amino-acid chain: Diacylglycerol O-acyltransferase 2 (388 aa).

Topologically, residues 1–69 (MKTLIAAYSG…NRSKVEKQLQ (69 aa)) are cytoplasmic. A disordered region spans residues 16–40 (RQAEADRSQRSHGGPALSREGSGRW). Residues 70–88 (VISVLQWVLSFLVLGVACS) traverse the membrane as a helical segment. Over 89–92 (AILM) the chain is Lumenal. The helical transmembrane segment at 93-112 (YIFCTDCWLIAVLYFTWLVF) threads the bilayer. The Cytoplasmic segment spans residues 113-388 (DWNTPKKGGR…LPETEVLEVN (276 aa)).

The protein belongs to the diacylglycerol acyltransferase family. In terms of assembly, forms multimeric complexes consisting of several DGAT2 subunits. Interacts with SLC27A1 and this interaction is enhanced in the presence of ZFYVE1. In terms of tissue distribution, predominantly expressed in liver and white adipose tissue. Expressed at lower level in mammary gland, testis and peripheral blood leukocytes. Expressed in sebaceous glands of normal skin but decreased psoriatic skin.

It is found in the endoplasmic reticulum membrane. It localises to the lipid droplet. Its subcellular location is the cytoplasm. The protein resides in the perinuclear region. The enzyme catalyses an acyl-CoA + a 1,2-diacyl-sn-glycerol = a triacyl-sn-glycerol + CoA. It catalyses the reaction all-trans-retinol + an acyl-CoA = an all-trans-retinyl ester + CoA. It carries out the reaction 2-(9Z-octadecenoyl)-glycerol + (9Z)-octadecenoyl-CoA = 1,2-di-(9Z-octadecenoyl)-sn-glycerol + CoA. The catalysed reaction is 1,2-di-(9Z-octadecenoyl)-sn-glycerol + (9Z)-octadecenoyl-CoA = 1,2,3-tri-(9Z-octadecenoyl)-glycerol + CoA. The enzyme catalyses all-trans-retinol + hexadecanoyl-CoA = all-trans-retinyl hexadecanoate + CoA. It catalyses the reaction 1-O-(9Z-octadecenyl)-glycerol + (9Z)-octadecenoyl-CoA = 1-O-(9Z-octadecyl)-3-(9Z-octadecenoyl)-glycerol + CoA. It carries out the reaction 1-(9Z-octadecenoyl)-glycerol + (9Z)-octadecenoyl-CoA = 1,2-di-(9Z-octadecenoyl)-glycerol + CoA. The catalysed reaction is 1,2-di-(9Z-octadecenoyl)-sn-glycerol + hexadecanoyl-CoA = 1,2-di-(9Z)-octadecenoyl-3-hexadecanoyl-sn-glycerol + CoA. The enzyme catalyses 1,3-di-(9Z-octadecenoyl)-glycerol + (9Z)-octadecenoyl-CoA = 1,2,3-tri-(9Z-octadecenoyl)-glycerol + CoA. It catalyses the reaction 2,3-di-(9Z)-octadecenoyl-sn-glycerol + (9Z)-octadecenoyl-CoA = 1,2,3-tri-(9Z-octadecenoyl)-glycerol + CoA. It carries out the reaction 2-(9Z-octadecenoyl)-glycerol + hexadecanoyl-CoA = 1-hexadecanoyl-2-(9Z-octadecenoyl)-sn-glycerol + CoA. It participates in glycerolipid metabolism; triacylglycerol biosynthesis. With respect to regulation, inhibited by niacin. Essential acyltransferase that catalyzes the terminal and only committed step in triacylglycerol synthesis by using diacylglycerol and fatty acyl CoA as substrates. Required for synthesis and storage of intracellular triglycerides. Probably plays a central role in cytosolic lipid accumulation. In liver, is primarily responsible for incorporating endogenously synthesized fatty acids into triglycerides. Also functions as an acyl-CoA retinol acyltransferase (ARAT). Also able to use 1-monoalkylglycerol (1-MAkG) as an acyl acceptor for the synthesis of monoalkyl-monoacylglycerol (MAMAG). In Homo sapiens (Human), this protein is Diacylglycerol O-acyltransferase 2.